The sequence spans 463 residues: UDP-glucosyltransferase A1 (463 aa).

It belongs to the UDP-glycosyltransferase family.

The catalysed reaction is 18-hydroxy-(9Z)-octadecenoate + UDP-alpha-D-glucose = (9Z)-18-hydroxyoctadec-9-enoate 18-O-beta-D-glucoside + UDP + H(+). It catalyses the reaction 17-hydroxy-(9Z)-octadecenoate + UDP-alpha-D-glucose = (9Z)-17-hydroxyoctadec-9-enoate 17-O-beta-D-glucoside + UDP + H(+). Catalyzes the first glycosylation step of sophorolipid biosynthesis, the coupling of glucose to a hydroxylated fatty acid to give rise to a glucolipid. Can glycosylate all hydroxyl fatty acids generated by cytochrome P450 monooxygenases CYP52M1, CYP52N1 and CYP52E3 into their corresponding glucolipids. Main products are 17-O- and 18-O-(beta-D-glucopyranosyl)-octadecenoic acids. The chain is UDP-glucosyltransferase A1 from Starmerella bombicola (Yeast).